A 555-amino-acid chain; its full sequence is Trehalase (555 aa).

The signal sequence occupies residues 1-16; sequence MIPFLLMVAFADTVLQ. Asn-46 carries N-linked (GlcNAc...) asparagine glycosylation. Substrate-binding positions include Arg-164, 171 to 172, and Asn-208; that span reads WD. Asn-216 carries N-linked (GlcNAc...) asparagine glycosylation. Substrate is bound by residues 217-219, 282-284, and Gly-316; these read RSQ and RPE. Asp-318 (proton donor/acceptor) is an active-site residue. N-linked (GlcNAc...) asparagine glycosylation is found at Asn-334 and Asn-371. The Proton donor/acceptor role is filled by Glu-516. Residue Glu-531 coordinates substrate.

Belongs to the glycosyl hydrolase 37 family. In terms of tissue distribution, bean-shaped accessory glands (bags).

The protein localises to the secreted. The enzyme catalyses alpha,alpha-trehalose + H2O = alpha-D-glucose + beta-D-glucose. The polypeptide is Trehalase (Tenebrio molitor (Yellow mealworm beetle)).